The primary structure comprises 444 residues: Deoxyguanosinetriphosphate triphosphohydrolase-like protein (444 aa).

Residues 1–26 are disordered; sequence MIASPWHERRLNEDKKRRNDHRSPFQ. The HD domain maps to 59 to 250; the sequence is RLTHSLEVSQ…MELADDIAYA (192 aa).

The protein belongs to the dGTPase family. Type 2 subfamily.

This is Deoxyguanosinetriphosphate triphosphohydrolase-like protein from Shewanella woodyi (strain ATCC 51908 / MS32).